A 463-amino-acid chain; its full sequence is Ribosomal protein uS12 methylthiotransferase RimO (463 aa).

Positions 15–130 (PKVGFVSLGC…VMQAVHSHLP (116 aa)) constitute an MTTase N-terminal domain. [4Fe-4S] cluster is bound by residues Cys-24, Cys-60, Cys-89, Cys-161, Cys-165, and Cys-168. Positions 147–392 (LTPRHYAYLK…MEVAEQVSAK (246 aa)) constitute a Radical SAM core domain. The TRAM domain maps to 395-463 (ARKVGKTLKV…ADGHDLWGEV (69 aa)).

The protein belongs to the methylthiotransferase family. RimO subfamily. The cofactor is [4Fe-4S] cluster.

The protein localises to the cytoplasm. It carries out the reaction L-aspartate(89)-[ribosomal protein uS12]-hydrogen + (sulfur carrier)-SH + AH2 + 2 S-adenosyl-L-methionine = 3-methylsulfanyl-L-aspartate(89)-[ribosomal protein uS12]-hydrogen + (sulfur carrier)-H + 5'-deoxyadenosine + L-methionine + A + S-adenosyl-L-homocysteine + 2 H(+). In terms of biological role, catalyzes the methylthiolation of an aspartic acid residue of ribosomal protein uS12. In Paraburkholderia phymatum (strain DSM 17167 / CIP 108236 / LMG 21445 / STM815) (Burkholderia phymatum), this protein is Ribosomal protein uS12 methylthiotransferase RimO.